The chain runs to 554 residues: Capsid vertex component 2 (554 aa).

The tract at residues 1–46 (MTQLSLFYQFPIQPIFEGHVRNTLICTEEDMQQLQNLGIRKLRKEK) is interaction with major capsid protein/MCP.

This sequence belongs to the herpesviridae CVC2 protein family. Heterodimerizes with CVC1. Interacts with major capsid protein/MCP and triplex capsid protein 1/TRX1 at the pentamer vertices. Interacts with the large tegument protein/LTP.

Its subcellular location is the virion. The protein localises to the host nucleus. Its function is as follows. Capsid vertex-specific component that plays a role during viral DNA encapsidation, assuring correct genome cleavage and presumably stabilizing capsids that contain full-length viral genomes. Participates in the interaction between the capsid and the tegument through interaction with the large tegument protein/LTP. The protein is Capsid vertex component 2 of Human herpesvirus 7 (strain JI) (HHV-7).